The sequence spans 103 residues: MFQAHLLRGTLTLSFFLHQADFDEAAEEVKKLKTRPTDEELKELYGFYKQATVGDINIECPGMLDLKGKAKWEAWNLKKGISKEDAMNAYISKAKTMVEKYGI.

The ACB domain maps to 18–103 (HQADFDEAAE…AKTMVEKYGI (86 aa)). Residues lysine 30, 45–49 (YGFYK), lysine 67, lysine 71, and tyrosine 90 contribute to the an acyl-CoA site.

It belongs to the ACBP family. Monomer.

Its subcellular location is the endoplasmic reticulum. The protein localises to the golgi apparatus. Its function is as follows. Binds medium- and long-chain acyl-CoA esters with very high affinity and may function as an intracellular carrier of acyl-CoA esters. It is also able to displace diazepam from the benzodiazepine (BZD) recognition site located on the GABA type A receptor. It is therefore possible that this protein also acts as a neuropeptide to modulate the action of the GABA receptor. The protein is Acyl-CoA-binding protein (DBI) of Anas platyrhynchos (Mallard).